A 1247-amino-acid polypeptide reads, in one-letter code: Nidogen-1 (1247 aa).

The N-terminal stretch at 1–28 (MLASSSRIRAAWTRALLLPLLLAGPVGC) is a signal peptide. An NIDO domain is found at 106–268 (PFLADLDTTD…GVWVFEIGSP (163 aa)). Residues tyrosine 289 and tyrosine 296 each carry the sulfotyrosine modification. Residues 386-426 (SRQTCANNRHQCSVHAECRDYATGFCCSCVAGYTGNGRQCV) enclose the EGF-like 1 domain. Intrachain disulfides connect cysteine 390/cysteine 403, cysteine 397/cysteine 412, cysteine 411/cysteine 618, cysteine 414/cysteine 425, cysteine 672/cysteine 685, cysteine 679/cysteine 695, cysteine 697/cysteine 708, cysteine 714/cysteine 727, cysteine 721/cysteine 736, cysteine 738/cysteine 750, cysteine 762/cysteine 777, cysteine 769/cysteine 787, cysteine 789/cysteine 800, cysteine 806/cysteine 817, cysteine 811/cysteine 826, cysteine 828/cysteine 839, cysteine 849/cysteine 878, cysteine 889/cysteine 896, and cysteine 898/cysteine 919. In terms of domain architecture, Nidogen G2 beta-barrel spans 430-667 (SPQRVNGKVK…GPVREGSPDA (238 aa)). In terms of domain architecture, EGF-like 2 spans 668–709 (LQNPCYIGTHGCDTNAACRPGPRTQFTCECSIGFRGDGRTCY). Positions 702–704 (RGD) match the Cell attachment site motif. Residues 710–751 (DIDECSEQPSVCGSHTICNNHPGTFRCECVEGYQFSDEGTCV) form the EGF-like 3; calcium-binding domain. An EGF-like 4 domain is found at 758–801 (PINYCETGLHNCDIPQRAQCIYTGGSSYTCSCLPGFSGDGQACQ). Residues 802-840 (DVDECQPSRCHPDAFCYNTPGSFTCQCKPGYQGDGFRCV) enclose the EGF-like 5; calcium-binding domain. One can recognise a Thyroglobulin type-1 domain in the interval 846–919 (KTRCQHEREH…RTRPGMTPPC (74 aa)). Threonine 922 and threonine 935 each carry an O-linked (GalNAc...) threonine glycan. 4 LDL-receptor class B repeats span residues 990 to 1032 (KMVY…DHLG), 1033 to 1075 (RNIF…DSVR), 1076 to 1120 (GNLY…DAFS), and 1121 to 1162 (SQLC…YGKN). The region spanning 1208–1244 (GHNYCSVNNGGCTHLCLATPGSRTCRCPDNTLGVDCI) is the EGF-like 6 domain. 3 disulfides stabilise this stretch: cysteine 1212/cysteine 1223, cysteine 1219/cysteine 1232, and cysteine 1234/cysteine 1243.

Interacts with FBLN1. Interacts with LGALS3BP. Interacts with PLXDC1. Interacts with SVEP1. Post-translationally, N- and O-glycosylated.

The protein resides in the secreted. The protein localises to the extracellular space. Its subcellular location is the extracellular matrix. It localises to the basement membrane. Functionally, sulfated glycoprotein widely distributed in basement membranes and tightly associated with laminin. Also binds to collagen IV and perlecan. It probably has a role in cell-extracellular matrix interactions. The chain is Nidogen-1 (NID1) from Homo sapiens (Human).